Reading from the N-terminus, the 419-residue chain is L-rhamnose isomerase (419 aa).

His262, Asp294, and Asp296 together coordinate Mn(2+).

The protein belongs to the rhamnose isomerase family. In terms of assembly, homotetramer. The cofactor is Mn(2+).

Its subcellular location is the cytoplasm. The catalysed reaction is L-rhamnopyranose = L-rhamnulose. The protein operates within carbohydrate degradation; L-rhamnose degradation; glycerone phosphate from L-rhamnose: step 1/3. In terms of biological role, catalyzes the interconversion of L-rhamnose and L-rhamnulose. The sequence is that of L-rhamnose isomerase from Escherichia coli O6:H1 (strain CFT073 / ATCC 700928 / UPEC).